We begin with the raw amino-acid sequence, 317 residues long: Aspartate carbamoyltransferase catalytic subunit (317 aa).

Positions 65 and 66 each coordinate carbamoyl phosphate. An L-aspartate-binding site is contributed by K93. R115, H145, and Q148 together coordinate carbamoyl phosphate. R178 and R233 together coordinate L-aspartate. Residues G274 and P275 each coordinate carbamoyl phosphate.

The protein belongs to the aspartate/ornithine carbamoyltransferase superfamily. ATCase family. Heterododecamer (2C3:3R2) of six catalytic PyrB chains organized as two trimers (C3), and six regulatory PyrI chains organized as three dimers (R2).

The enzyme catalyses carbamoyl phosphate + L-aspartate = N-carbamoyl-L-aspartate + phosphate + H(+). The protein operates within pyrimidine metabolism; UMP biosynthesis via de novo pathway; (S)-dihydroorotate from bicarbonate: step 2/3. Catalyzes the condensation of carbamoyl phosphate and aspartate to form carbamoyl aspartate and inorganic phosphate, the committed step in the de novo pyrimidine nucleotide biosynthesis pathway. This Bordetella parapertussis (strain 12822 / ATCC BAA-587 / NCTC 13253) protein is Aspartate carbamoyltransferase catalytic subunit.